Reading from the N-terminus, the 119-residue chain is Large ribosomal subunit protein uL18 (119 aa).

It belongs to the universal ribosomal protein uL18 family. As to quaternary structure, part of the 50S ribosomal subunit; part of the 5S rRNA/L5/L18/L25 subcomplex. Contacts the 5S and 23S rRNAs.

This is one of the proteins that bind and probably mediate the attachment of the 5S RNA into the large ribosomal subunit, where it forms part of the central protuberance. The protein is Large ribosomal subunit protein uL18 of Chlorobaculum tepidum (strain ATCC 49652 / DSM 12025 / NBRC 103806 / TLS) (Chlorobium tepidum).